Reading from the N-terminus, the 431-residue chain is UDP-N-acetylglucosamine 1-carboxyvinyltransferase (431 aa).

Position 25 to 26 (25 to 26 (KN)) interacts with phosphoenolpyruvate. Arginine 101 contributes to the UDP-N-acetyl-alpha-D-glucosamine binding site. Cysteine 125 acts as the Proton donor in catalysis. At cysteine 125 the chain carries 2-(S-cysteinyl)pyruvic acid O-phosphothioketal. Residues aspartate 317 and isoleucine 339 each coordinate UDP-N-acetyl-alpha-D-glucosamine.

The protein belongs to the EPSP synthase family. MurA subfamily.

The protein resides in the cytoplasm. It carries out the reaction phosphoenolpyruvate + UDP-N-acetyl-alpha-D-glucosamine = UDP-N-acetyl-3-O-(1-carboxyvinyl)-alpha-D-glucosamine + phosphate. The protein operates within cell wall biogenesis; peptidoglycan biosynthesis. Functionally, cell wall formation. Adds enolpyruvyl to UDP-N-acetylglucosamine. This is UDP-N-acetylglucosamine 1-carboxyvinyltransferase from Thermobifida fusca (strain YX).